The following is a 380-amino-acid chain: Chaperone protein DnaJ (380 aa).

The 66-residue stretch at 5–70 (DFYEVLGVSR…QKRAAYDQYG (66 aa)) folds into the J domain. The CR-type zinc-finger motif lies at 135-213 (GCEKDIEIPT…CHGDGRVQKT (79 aa)). Zn(2+)-binding residues include Cys-148, Cys-151, Cys-165, Cys-168, Cys-187, Cys-190, Cys-201, and Cys-204. 4 CXXCXGXG motif repeats span residues 148-155 (CEPCDGTG), 165-172 (CSTCHGQG), 187-194 (CPTCHGKG), and 201-208 (CNSCHGDG).

It belongs to the DnaJ family. Homodimer. Requires Zn(2+) as cofactor.

It localises to the cytoplasm. Participates actively in the response to hyperosmotic and heat shock by preventing the aggregation of stress-denatured proteins and by disaggregating proteins, also in an autonomous, DnaK-independent fashion. Unfolded proteins bind initially to DnaJ; upon interaction with the DnaJ-bound protein, DnaK hydrolyzes its bound ATP, resulting in the formation of a stable complex. GrpE releases ADP from DnaK; ATP binding to DnaK triggers the release of the substrate protein, thus completing the reaction cycle. Several rounds of ATP-dependent interactions between DnaJ, DnaK and GrpE are required for fully efficient folding. Also involved, together with DnaK and GrpE, in the DNA replication of plasmids through activation of initiation proteins. The protein is Chaperone protein DnaJ of Aliivibrio salmonicida (strain LFI1238) (Vibrio salmonicida (strain LFI1238)).